Reading from the N-terminus, the 355-residue chain is Anthranilate phosphoribosyltransferase (355 aa).

5-phospho-alpha-D-ribose 1-diphosphate is bound by residues Gly-85, 88-89, Thr-93, 95-98, 113-121, and Ser-125; these read GD, NIST, and KHGNRAASS. Residue Gly-85 coordinates anthranilate. Ser-97 is a Mg(2+) binding site. Residue Asn-116 participates in anthranilate binding. Residue Arg-171 participates in anthranilate binding. Residues Asp-229 and Glu-230 each contribute to the Mg(2+) site.

It belongs to the anthranilate phosphoribosyltransferase family. As to quaternary structure, homodimer. The cofactor is Mg(2+).

The enzyme catalyses N-(5-phospho-beta-D-ribosyl)anthranilate + diphosphate = 5-phospho-alpha-D-ribose 1-diphosphate + anthranilate. It functions in the pathway amino-acid biosynthesis; L-tryptophan biosynthesis; L-tryptophan from chorismate: step 2/5. Catalyzes the transfer of the phosphoribosyl group of 5-phosphorylribose-1-pyrophosphate (PRPP) to anthranilate to yield N-(5'-phosphoribosyl)-anthranilate (PRA). This chain is Anthranilate phosphoribosyltransferase, found in Acidothermus cellulolyticus (strain ATCC 43068 / DSM 8971 / 11B).